A 314-amino-acid chain; its full sequence is Mitochondrial 2-oxoglutarate/malate carrier protein (314 aa).

The residue at position 2 (Ala-2) is an N-acetylalanine. A Phosphoserine modification is found at Ser-6. Solcar repeat units follow at residues 23-108 (VKFL…LFER), 117-208 (PGFL…SKQF), and 217-306 (DNIL…MNKA). A helical transmembrane segment spans residues 24-42 (KFLFGGLAGMGATVFVQPL). An N6-succinyllysine modification is found at Lys-57. The helical transmembrane segment at 83–101 (GLSAGLLRQATYTTTRLGI) threads the bilayer. Tyr-102 carries the phosphotyrosine modification. The next 3 membrane-spanning stretches (helical) occupy residues 119 to 140 (FLLKAVIGMTAGATGAFVGTPA), 183 to 202 (GCIPTMARAVVVNAAQLASY), and 222 to 240 (HFCASMISGLVTTAASMPV). Residue Lys-256 is modified to N6-acetyllysine. The chain crosses the membrane as a helical span at residues 281 to 300 (GFTPYYARLGPHTVLTFIFL).

This sequence belongs to the mitochondrial carrier (TC 2.A.29) family. Interacts with SMIM26. The N-terminus is blocked. As to expression, heart, liver and brain.

Its subcellular location is the mitochondrion inner membrane. The catalysed reaction is (S)-malate(in) + 2-oxoglutarate(out) = (S)-malate(out) + 2-oxoglutarate(in). The enzyme catalyses malonate(in) + 2-oxoglutarate(out) = malonate(out) + 2-oxoglutarate(in). It carries out the reaction succinate(in) + 2-oxoglutarate(out) = succinate(out) + 2-oxoglutarate(in). It catalyses the reaction maleate(in) + 2-oxoglutarate(out) = maleate(out) + 2-oxoglutarate(in). The catalysed reaction is oxaloacetate(in) + 2-oxoglutarate(out) = oxaloacetate(out) + 2-oxoglutarate(in). Functionally, catalyzes the transport of 2-oxoglutarate (alpha-oxoglutarate) across the inner mitochondrial membrane in an electroneutral exchange for malate. Can also exchange 2-oxoglutarate for other dicarboxylic acids such as malonate, succinate, maleate and oxaloacetate, although with lower affinity. Contributes to several metabolic processes, including the malate-aspartate shuttle, the oxoglutarate/isocitrate shuttle, in gluconeogenesis from lactate, and in nitrogen metabolism. Maintains mitochondrial fusion and fission events, and the organization and morphology of cristae. Involved in the regulation of apoptosis. Helps protect from cytotoxic-induced apoptosis by modulating glutathione levels in mitochondria. This is Mitochondrial 2-oxoglutarate/malate carrier protein (SLC25A11) from Bos taurus (Bovine).